Reading from the N-terminus, the 132-residue chain is Phosphoribosyl-AMP cyclohydrolase (132 aa).

Position 82 (Asp-82) interacts with Mg(2+). Residue Cys-83 coordinates Zn(2+). Asp-84 and Asp-86 together coordinate Mg(2+). Zn(2+) contacts are provided by Cys-99 and Cys-106.

It belongs to the PRA-CH family. As to quaternary structure, homodimer. Requires Mg(2+) as cofactor. Zn(2+) serves as cofactor.

The protein localises to the cytoplasm. It carries out the reaction 1-(5-phospho-beta-D-ribosyl)-5'-AMP + H2O = 1-(5-phospho-beta-D-ribosyl)-5-[(5-phospho-beta-D-ribosylamino)methylideneamino]imidazole-4-carboxamide. It functions in the pathway amino-acid biosynthesis; L-histidine biosynthesis; L-histidine from 5-phospho-alpha-D-ribose 1-diphosphate: step 3/9. Catalyzes the hydrolysis of the adenine ring of phosphoribosyl-AMP. This chain is Phosphoribosyl-AMP cyclohydrolase, found in Paramagnetospirillum magneticum (strain ATCC 700264 / AMB-1) (Magnetospirillum magneticum).